Reading from the N-terminus, the 368-residue chain is 3-isopropylmalate dehydrogenase (368 aa).

An NAD(+)-binding site is contributed by 79 to 91 (GPEWGTSSTVRPE). Substrate is bound by residues Arg-98, Arg-108, Arg-137, and Asp-226. Positions 226, 251, and 255 each coordinate Mg(2+). 291-303 (GSAPDISGKGIVN) contributes to the NAD(+) binding site.

This sequence belongs to the isocitrate and isopropylmalate dehydrogenases family. As to quaternary structure, homodimer. The cofactor is Mg(2+). Mn(2+) is required as a cofactor.

The protein localises to the cytoplasm. The enzyme catalyses (2R,3S)-3-isopropylmalate + NAD(+) = 4-methyl-2-oxopentanoate + CO2 + NADH. Its pathway is amino-acid biosynthesis; L-leucine biosynthesis; L-leucine from 3-methyl-2-oxobutanoate: step 3/4. Its function is as follows. Catalyzes the oxidation of 3-carboxy-2-hydroxy-4-methylpentanoate (3-isopropylmalate) to 3-carboxy-4-methyl-2-oxopentanoate. The product decarboxylates to 4-methyl-2 oxopentanoate. This Sordaria macrospora protein is 3-isopropylmalate dehydrogenase (LEU1).